We begin with the raw amino-acid sequence, 478 residues long: Glycogen synthase (478 aa).

Lys-20 lines the ADP-alpha-D-glucose pocket.

This sequence belongs to the glycosyltransferase 1 family. Bacterial/plant glycogen synthase subfamily.

It catalyses the reaction [(1-&gt;4)-alpha-D-glucosyl](n) + ADP-alpha-D-glucose = [(1-&gt;4)-alpha-D-glucosyl](n+1) + ADP + H(+). It participates in glycan biosynthesis; glycogen biosynthesis. Its function is as follows. Synthesizes alpha-1,4-glucan chains using ADP-glucose. In Cereibacter sphaeroides (strain ATCC 17023 / DSM 158 / JCM 6121 / CCUG 31486 / LMG 2827 / NBRC 12203 / NCIMB 8253 / ATH 2.4.1.) (Rhodobacter sphaeroides), this protein is Glycogen synthase.